A 175-amino-acid chain; its full sequence is MVAAPCFRVLRLWTYAHRCDLGHTDPLSRRTEMTTTERPTTMCEAFQRTAVMDPDAVALRTPGGNQTMTWRDYAAQVRRVAAGLAGLGVRRGDTVSLMMANRIEFYPLDVGAQHVGATSFSVYNTLPAEQLTYVFDNAGTKVVICEQQYVDRVRASGVPIEHIVCVDGAPPARSR.

This is an uncharacterized protein from Mycobacterium tuberculosis (strain ATCC 25618 / H37Rv).